We begin with the raw amino-acid sequence, 957 residues long: Ribonuclease 3-like protein 3 (957 aa).

Residues 4 to 142 (VEAVEKILNY…IAATVFIDVN (139 aa)) enclose the RNase III 1 domain. The DRBM 1 domain maps to 307 to 382 (NGRGELIEIC…AYHMIRALES (76 aa)). Positions 415–551 (VEAVEKILNY…VAGAVYIDVK (137 aa)) constitute an RNase III 2 domain. DRBM domains lie at 566-645 (EPIY…KLSE) and 837-912 (DEKG…ALES).

Its function is as follows. Ribonuclease that cleaves double-stranded RNA (dsRNA). The polypeptide is Ribonuclease 3-like protein 3 (RTL3) (Arabidopsis thaliana (Mouse-ear cress)).